The chain runs to 619 residues: Kinesin light chain 4 (619 aa).

S2 carries the N-acetylserine modification. The stretch at 55-88 (QQGGHEEGLVHEKARQLRRSMENIELGLSEAQVM) is one TPR 1 repeat. Positions 65 to 155 (HEKARQLRRS…HLEFLRQLRQ (91 aa)) form a coiled coil. Positions 156-175 (YDEDGHGMEEKEGEATKDSL) are enriched in basic and acidic residues. The segment at 156 to 199 (YDEDGHGMEEKEGEATKDSLDDLFPNEEEEDSGNDLSRGQGAAA) is disordered. S174 carries the phosphoserine modification. The segment covering 179–188 (FPNEEEEDSG) has biased composition (acidic residues). TPR repeat units follow at residues 211-244 (LRTL…LERT), 253-286 (ATML…REST), 295-328 (AATL…REKV), 337-370 (AKQL…YESQ), and 379-412 (ARTK…AHVQ). A Phosphoserine modification is found at S460. The stretch at 464–497 (NTTLKNLGALYRRQGKLEAAETLEECALRSRKQG) is one TPR 7 repeat. Residues S565, S566, and S590 each carry the phosphoserine modification. The segment at 571–619 (RKLQGTEPRPSSSSMKRAASLNYLNQPNAAPLQVSRGLSASTVDLSSSS) is disordered. Residues 609–619 (SASTVDLSSSS) show a composition bias toward low complexity. Position 612 is a phosphothreonine (T612).

Belongs to the kinesin light chain family. Oligomeric complex composed of two heavy chains and two light chains.

Its subcellular location is the cytoplasm. It localises to the cytoskeleton. Its function is as follows. Kinesin is a microtubule-associated force-producing protein that may play a role in organelle transport. The light chain may function in coupling of cargo to the heavy chain or in the modulation of its ATPase activity. The sequence is that of Kinesin light chain 4 (Klc4) from Mus musculus (Mouse).